The chain runs to 356 residues: GTPase HflX (356 aa).

Residues 180–356 (PSIGIVGYTN…KIYQLATQLS (177 aa)) enclose the Hflx-type G domain. GTP contacts are provided by residues 186–193 (GYTNSGKT), 211–215 (FTTMS), 232–235 (DTVG), 300–303 (NKID), and 334–336 (SAL). Positions 193 and 213 each coordinate Mg(2+).

This sequence belongs to the TRAFAC class OBG-HflX-like GTPase superfamily. HflX GTPase family. In terms of assembly, monomer. Associates with the 50S ribosomal subunit. Does not associate with 70S ribosomes. The cofactor is Mg(2+).

Its subcellular location is the cytoplasm. Its activity is regulated as follows. GTPase activity is stimulated by the presence of 50S ribosomal subunits. Hydrolysis is probably regulated by the HflX N-terminal domain. In terms of biological role, GTPase that associates with the 50S ribosomal subunit and may have a role during protein synthesis or ribosome biogenesis. Specific for GTP. In Saccharolobus solfataricus (strain ATCC 35092 / DSM 1617 / JCM 11322 / P2) (Sulfolobus solfataricus), this protein is GTPase HflX.